The sequence spans 85 residues: uncharacterized protein (85 aa).

The tract at residues 44–85 is disordered; the sequence is EAHPSEHNGTVPRSLSQEWAKILAEEAEENSEENNDESEEDN. Residues 50 to 60 are compositionally biased toward polar residues; the sequence is HNGTVPRSLSQ. The span at 68–85 shows a compositional bias: acidic residues; it reads EEAEENSEENNDESEEDN.

This is an uncharacterized protein from Haloarcula hispanica (His1V).